Here is a 261-residue protein sequence, read N- to C-terminus: tRNA pseudouridine synthase A (261 aa).

The active-site Nucleophile is the aspartate 51. A substrate-binding site is contributed by tyrosine 109.

Belongs to the tRNA pseudouridine synthase TruA family. In terms of assembly, homodimer.

The enzyme catalyses uridine(38/39/40) in tRNA = pseudouridine(38/39/40) in tRNA. Formation of pseudouridine at positions 38, 39 and 40 in the anticodon stem and loop of transfer RNAs. The sequence is that of tRNA pseudouridine synthase A from Shewanella sediminis (strain HAW-EB3).